Reading from the N-terminus, the 553-residue chain is Heterochromatin protein 1-binding protein 3 (553 aa).

The residue at position 2 (alanine 2) is an N-acetylalanine. Serine 6 is subject to Phosphoserine. The disordered stretch occupies residues 30–131 (LGEKADDSTM…SKEKEKKVKK (102 aa)). Threonine 51 bears the Phosphothreonine mark. The span at 60–71 (GEEEKPEPDGSS) shows a compositional bias: acidic residues. Lysine 64 is covalently cross-linked (Glycyl lysine isopeptide (Lys-Gly) (interchain with G-Cter in SUMO2)). Residue threonine 85 is modified to Phosphothreonine. Positions 91–127 (REAEQPKGEPESGEKEESKSAEETKKEEKDQSKEKEK) are enriched in basic and acidic residues. Residue lysine 97 forms a Glycyl lysine isopeptide (Lys-Gly) (interchain with G-Cter in SUMO2) linkage. Residues serine 142, serine 155, and serine 156 each carry the phosphoserine modification. Positions 157 to 232 (PRPKMDAILT…GASGSFVVVQ (76 aa)) constitute an H15 1 domain. Position 190 is an N6-acetyllysine (lysine 190). The tract at residues 231 to 251 (VQKSKTPQKSKNRKKGSAVDP) is disordered. Basic residues predominate over residues 236 to 246 (TPQKSKNRKKG). Phosphoserine is present on serine 247. The short motif at 253-257 (PQVKL) is the PxVxL motif element. H15 domains are found at residues 253-328 (PQVK…QLKK) and 335-411 (LGGS…QLCF). Lysine 256 is covalently cross-linked (Glycyl lysine isopeptide (Lys-Gly) (interchain with G-Cter in SUMO2)). The tract at residues 422–553 (PKKVSDGSED…MKKKSFKTKK (132 aa)) is disordered. Positions 428-449 (GSEDEDEEEDEEESSEDSEDEE) are enriched in acidic residues. A phosphoserine mark is found at serine 441, serine 442, and serine 445. Composition is skewed to basic residues over residues 488–509 (GKVRPLPKKAPPKAKTPARKGR) and 542–553 (SAMKKKSFKTKK).

In terms of assembly, interacts (via PxVxL motif) with CBX5.

Its subcellular location is the nucleus. It localises to the chromosome. Functionally, component of heterochromatin that maintains heterochromatin integrity during G1/S progression and regulates the duration of G1 phase to critically influence cell proliferative capacity. May play a role in hypoxia-induced oncogenesis. In Rattus norvegicus (Rat), this protein is Heterochromatin protein 1-binding protein 3 (Hp1bp3).